The chain runs to 138 residues: Small ribosomal subunit protein bS6 (138 aa).

The span at 97-121 shows a compositional bias: basic and acidic residues; that stretch reads TEQSEMLKAEENRSERRERRDRPDN. Residues 97–138 form a disordered region; sequence TEQSEMLKAEENRSERRERRDRPDNTDGSNENDSDSDNNADE. Residues 126 to 138 show a composition bias toward acidic residues; the sequence is NENDSDSDNNADE.

This sequence belongs to the bacterial ribosomal protein bS6 family.

Binds together with bS18 to 16S ribosomal RNA. The chain is Small ribosomal subunit protein bS6 from Stutzerimonas stutzeri (strain A1501) (Pseudomonas stutzeri).